The primary structure comprises 109 residues: U4-lycotoxin-Ls1a (109 aa).

A signal peptide spans 1–22 (MKVLVLFSVLFLTLFSYSSTEA). The propeptide occupies 23-44 (IDEFDSDAEEDMLSLMANEQVR). Positions 45–88 (AKACTPRLHDCSHDRHSCCRGELFKDVCYCFYPEGEDKTEVCSC) are knottin domain. Intrachain disulfides connect C48-C63, C55-C72, C62-C88, and C74-C86. The linear cationic cytotoxin domain stretch occupies residues 89–108 (QQPKSHKYIEKVVDKAKTVV).

This sequence belongs to the neurotoxin 19 (CSTX) family. 05 (U4-Lctx) subfamily. In terms of tissue distribution, expressed by the venom gland.

It is found in the secreted. In terms of biological role, enhances the high-affinity desensitization of human P2RX3 purinoceptors. This is U4-lycotoxin-Ls1a from Lycosa singoriensis (Wolf spider).